Reading from the N-terminus, the 227-residue chain is RNA-free ribonuclease P (227 aa).

The protein belongs to the HARP family.

It catalyses the reaction Endonucleolytic cleavage of RNA, removing 5'-extranucleotides from tRNA precursor.. RNA-free RNase P that catalyzes the removal of the 5'-leader sequence from pre-tRNA to produce the mature 5'-terminus. The protein is RNA-free ribonuclease P of Archaeoglobus fulgidus (strain ATCC 49558 / DSM 4304 / JCM 9628 / NBRC 100126 / VC-16).